A 739-amino-acid polypeptide reads, in one-letter code: Phosphoribosylformylglycinamidine synthase subunit PurL (739 aa).

The active site involves H53. The ATP site is built by Y56 and K95. E97 lines the Mg(2+) pocket. Substrate contacts are provided by residues 98 to 101 and R120; that span reads SHNH. H99 functions as the Proton acceptor in the catalytic mechanism. D121 lines the Mg(2+) pocket. Position 244 (Q244) interacts with substrate. D274 contacts Mg(2+). 318–320 contributes to the substrate binding site; sequence ESQ. D501 and G538 together coordinate ATP. N539 is a binding site for Mg(2+). Position 541 (S541) interacts with substrate.

This sequence belongs to the FGAMS family. In terms of assembly, monomer. Part of the FGAM synthase complex composed of 1 PurL, 1 PurQ and 2 PurS subunits.

The protein localises to the cytoplasm. It carries out the reaction N(2)-formyl-N(1)-(5-phospho-beta-D-ribosyl)glycinamide + L-glutamine + ATP + H2O = 2-formamido-N(1)-(5-O-phospho-beta-D-ribosyl)acetamidine + L-glutamate + ADP + phosphate + H(+). It participates in purine metabolism; IMP biosynthesis via de novo pathway; 5-amino-1-(5-phospho-D-ribosyl)imidazole from N(2)-formyl-N(1)-(5-phospho-D-ribosyl)glycinamide: step 1/2. Its function is as follows. Part of the phosphoribosylformylglycinamidine synthase complex involved in the purines biosynthetic pathway. Catalyzes the ATP-dependent conversion of formylglycinamide ribonucleotide (FGAR) and glutamine to yield formylglycinamidine ribonucleotide (FGAM) and glutamate. The FGAM synthase complex is composed of three subunits. PurQ produces an ammonia molecule by converting glutamine to glutamate. PurL transfers the ammonia molecule to FGAR to form FGAM in an ATP-dependent manner. PurS interacts with PurQ and PurL and is thought to assist in the transfer of the ammonia molecule from PurQ to PurL. This chain is Phosphoribosylformylglycinamidine synthase subunit PurL, found in Listeria monocytogenes serotype 4b (strain F2365).